Here is a 428-residue protein sequence, read N- to C-terminus: Lupus La protein homolog A (428 aa).

The region spanning 7–99 is the HTH La-type RNA-binding domain; it reads KEQKLDSDTK…RRSPAKPLPE (93 aa). Residues 111–203 form the RRM domain; it reads KSVYIKGFPT…EERKLNKSEE (93 aa). 2 disordered regions span residues 187 to 223 and 323 to 428; these read EYHA…DAER and QESF…VGDQ. 2 short sequence motifs (nuclear localization signal) span residues 196–212 and 316–332; these read RKLN…QVKK and KKIL…RKGR. The xRRM domain occupies 227–349; that stretch reads EERVGSLLKF…KGRGGKGNDS (123 aa). Composition is skewed to basic residues over residues 328–343 and 352–361; these read KRKG…KGRG and RKRTQFQGKK. The segment covering 366–377 has biased composition (acidic residues); the sequence is SSDDEDDMEESE. Residues 406–428 are compositionally biased toward basic and acidic residues; it reads RSLDDKAEDGPAVKQSKTEVGDQ.

Post-translationally, phosphorylated.

It localises to the nucleus. Its function is as follows. La protein plays a role in the transcription of RNA polymerase III. It is most probably a transcription termination factor. Binds to the 3' termini of virtually all nascent polymerase III transcripts. This Xenopus laevis (African clawed frog) protein is Lupus La protein homolog A (ssb-a).